The primary structure comprises 105 residues: MSALTRLASFARVGGRLFRSGCARTAGDGGVRHAGGGVHIEPRYRQFPQLTRSQVFQSEFFSGLMWFWILWRFWHDSEEVLGHFPYPDPSQWTDEELGIPPDDED.

The transit peptide at 1–33 directs the protein to the mitochondrion; the sequence is MSALTRLASFARVGGRLFRSGCARTAGDGGVRH. Residues 85-105 form a disordered region; the sequence is PYPDPSQWTDEELGIPPDDED. Over residues 93–105 the composition is skewed to acidic residues; sequence TDEELGIPPDDED.

The protein belongs to the complex I NDUFB2 subunit family. In terms of assembly, complex I is composed of 45 different subunits.

It is found in the mitochondrion inner membrane. Accessory subunit of the mitochondrial membrane respiratory chain NADH dehydrogenase (Complex I), that is believed not to be involved in catalysis. Complex I functions in the transfer of electrons from NADH to the respiratory chain. The immediate electron acceptor for the enzyme is believed to be ubiquinone. The sequence is that of NADH dehydrogenase [ubiquinone] 1 beta subcomplex subunit 2, mitochondrial (NDUFB2) from Homo sapiens (Human).